The sequence spans 635 residues: Probable serine/threonine-protein kinase DDB_G0270146 (635 aa).

The Protein kinase domain occupies 77–329 (VISDIAIGKG…AKELLSHPWI (253 aa)). Residues 83-91 (IGKGAFATV) and Lys106 each bind ATP. Asp199 functions as the Proton acceptor in the catalytic mechanism. The span at 360–392 (SLLSNSSGGDDSVTDSDLSISNQSSRSSSFLLD) shows a compositional bias: low complexity. A disordered region spans residues 360 to 405 (SLLSNSSGGDDSVTDSDLSISNQSSRSSSFLLDDGGGGGGSKNHTV). Coiled-coil stretches lie at residues 417–456 (IEFN…KYRE) and 536–585 (KKAL…KDSS). Residues 540–582 (EAQKRREKEQEKLKEQEKLKEKKKEKDIKKEKDKKDKKDKQLK) show a composition bias toward basic and acidic residues. The disordered stretch occupies residues 540 to 635 (EAQKRREKEQ…GRSSSKIFNE (96 aa)). A compositionally biased stretch (low complexity) spans 583 to 598 (DSSSSTTTTNSTPSTP). Over residues 626–635 (GRSSSKIFNE) the composition is skewed to polar residues.

This sequence belongs to the protein kinase superfamily. STE Ser/Thr protein kinase family. It depends on Mg(2+) as a cofactor.

It catalyses the reaction L-seryl-[protein] + ATP = O-phospho-L-seryl-[protein] + ADP + H(+). The enzyme catalyses L-threonyl-[protein] + ATP = O-phospho-L-threonyl-[protein] + ADP + H(+). The sequence is that of Probable serine/threonine-protein kinase DDB_G0270146 from Dictyostelium discoideum (Social amoeba).